The chain runs to 413 residues: Chloramphenicol efflux pump MT0201 (413 aa).

12 helical membrane-spanning segments follow: residues 23 to 43 (LSVL…PVGA), 55 to 75 (VVLV…TTVP), 89 to 109 (LVVS…APNF), 110 to 130 (AVLA…WAVI), 150 to 170 (IYIG…AMSL), 176 to 196 (LAAV…RLAL), 226 to 246 (VLTM…VVII), 256 to 276 (NLAW…PLVA), 286 to 306 (AVIV…ALAF), 312 to 332 (AATA…ATAV), 353 to 373 (GLYV…GGLL), and 378 to 398 (LAMM…GMTV).

This sequence belongs to the major facilitator superfamily.

It is found in the cell membrane. In terms of biological role, active efflux pump that plays an important role in chloramphenicol resistance. This chain is Chloramphenicol efflux pump MT0201, found in Mycobacterium tuberculosis (strain CDC 1551 / Oshkosh).